The chain runs to 146 residues: NADH-ubiquinone oxidoreductase chain 6 (146 aa).

Helical transmembrane passes span 10 to 30 (LTAI…ILFV), 41 to 61 (FVLM…MLFL), 75 to 95 (GTIT…LDIT), and 124 to 144 (AMLL…AMSI).

This sequence belongs to the complex I subunit 6 family.

Its subcellular location is the mitochondrion membrane. The enzyme catalyses a ubiquinone + NADH + 5 H(+)(in) = a ubiquinol + NAD(+) + 4 H(+)(out). Its function is as follows. Core subunit of the mitochondrial membrane respiratory chain NADH dehydrogenase (Complex I) that is believed to belong to the minimal assembly required for catalysis. Complex I functions in the transfer of electrons from NADH to the respiratory chain. The immediate electron acceptor for the enzyme is believed to be ubiquinone. The chain is NADH-ubiquinone oxidoreductase chain 6 (ND6) from Debaryomyces hansenii (strain ATCC 36239 / CBS 767 / BCRC 21394 / JCM 1990 / NBRC 0083 / IGC 2968) (Yeast).